A 310-amino-acid chain; its full sequence is Putative carboxypeptidase SCO6489 (310 aa).

Catalysis depends on Ser-116, which acts as the Nucleophile. Catalysis depends on charge relay system residues Glu-212 and His-277.

This sequence belongs to the peptidase S66 family.

The protein is Putative carboxypeptidase SCO6489 of Streptomyces coelicolor (strain ATCC BAA-471 / A3(2) / M145).